A 218-amino-acid chain; its full sequence is Adenylate kinase (218 aa).

10–15 (GAGKGT) contacts ATP. An NMP region spans residues 30 to 59 (STGDMLRAAVKAGTPLGLEAKKVMDAGGLV). Residues threonine 31, arginine 36, 57–59 (GLV), 85–88 (GFPR), and glutamine 92 contribute to the AMP site. The interval 122–159 (ERRVHPASGRSYHVRFNPPKAEGVDDVTGEPLVQRDDD) is LID. Residues arginine 123 and 132–133 (SY) contribute to the ATP site. Positions 156 and 167 each coordinate AMP. Glycine 203 contributes to the ATP binding site.

It belongs to the adenylate kinase family. Monomer.

The protein resides in the cytoplasm. It catalyses the reaction AMP + ATP = 2 ADP. Its pathway is purine metabolism; AMP biosynthesis via salvage pathway; AMP from ADP: step 1/1. Its function is as follows. Catalyzes the reversible transfer of the terminal phosphate group between ATP and AMP. Plays an important role in cellular energy homeostasis and in adenine nucleotide metabolism. The protein is Adenylate kinase of Bordetella pertussis (strain Tohama I / ATCC BAA-589 / NCTC 13251).